The primary structure comprises 363 residues: tRNA N6-adenosine threonylcarbamoyltransferase (363 aa).

Positions 121 and 125 each coordinate Fe cation. Residues 143 to 147 (LASGG), aspartate 176, glycine 189, and asparagine 287 contribute to the substrate site. Aspartate 315 contributes to the Fe cation binding site.

It belongs to the KAE1 / TsaD family. Requires Fe(2+) as cofactor.

It is found in the cytoplasm. The catalysed reaction is L-threonylcarbamoyladenylate + adenosine(37) in tRNA = N(6)-L-threonylcarbamoyladenosine(37) in tRNA + AMP + H(+). Its function is as follows. Required for the formation of a threonylcarbamoyl group on adenosine at position 37 (t(6)A37) in tRNAs that read codons beginning with adenine. Is involved in the transfer of the threonylcarbamoyl moiety of threonylcarbamoyl-AMP (TC-AMP) to the N6 group of A37, together with TsaE and TsaB. TsaD likely plays a direct catalytic role in this reaction. This is tRNA N6-adenosine threonylcarbamoyltransferase from Rhodopseudomonas palustris (strain TIE-1).